Reading from the N-terminus, the 121-residue chain is Large ribosomal subunit protein bL17 (121 aa).

Belongs to the bacterial ribosomal protein bL17 family. In terms of assembly, part of the 50S ribosomal subunit. Contacts protein L32.

In Mycoplasmopsis agalactiae (strain NCTC 10123 / CIP 59.7 / PG2) (Mycoplasma agalactiae), this protein is Large ribosomal subunit protein bL17.